Consider the following 513-residue polypeptide: ATP synthase subunit alpha (513 aa).

172 to 179 (GDRQTGKT) lines the ATP pocket.

Belongs to the ATPase alpha/beta chains family. In terms of assembly, F-type ATPases have 2 components, CF(1) - the catalytic core - and CF(0) - the membrane proton channel. CF(1) has five subunits: alpha(3), beta(3), gamma(1), delta(1), epsilon(1). CF(0) has three main subunits: a(1), b(2) and c(9-12). The alpha and beta chains form an alternating ring which encloses part of the gamma chain. CF(1) is attached to CF(0) by a central stalk formed by the gamma and epsilon chains, while a peripheral stalk is formed by the delta and b chains.

The protein resides in the cell inner membrane. It carries out the reaction ATP + H2O + 4 H(+)(in) = ADP + phosphate + 5 H(+)(out). Functionally, produces ATP from ADP in the presence of a proton gradient across the membrane. The alpha chain is a regulatory subunit. The polypeptide is ATP synthase subunit alpha (Gluconacetobacter diazotrophicus (strain ATCC 49037 / DSM 5601 / CCUG 37298 / CIP 103539 / LMG 7603 / PAl5)).